The sequence spans 894 residues: Nitrate reductase [NADPH] (894 aa).

Positions 1-79 are disordered; that stretch reads MAVKSQLGVT…PEDLKTPDHR (79 aa). Residues 7–16 show a composition bias toward polar residues; the sequence is LGVTYTTKTF. Residues 69 to 79 are compositionally biased toward basic and acidic residues; the sequence is LPEDLKTPDHR. C169 is a Mo-molybdopterin binding site. The Cytochrome b5 heme-binding domain occupies 535 to 610; sequence VRIISLEELK…MPQYHIGTLN (76 aa). 2 residues coordinate heme: H570 and H593. The FAD-binding FR-type domain maps to 638–749; the sequence is KYWSKAILET…KGPVGKFEYL (112 aa). FAD is bound by residues 692–695, 709–713, 723–725, S773, and T776; these read RAYT, LIKIY, and KMT.

The protein belongs to the nitrate reductase family. Homodimer. FAD serves as cofactor. Heme is required as a cofactor. It depends on Mo-molybdopterin as a cofactor.

The enzyme catalyses nitrite + NADP(+) + H2O = nitrate + NADPH + H(+). Its function is as follows. Nitrate reductase is a key enzyme involved in the first step of nitrate assimilation in plants, fungi and bacteria. The sequence is that of Nitrate reductase [NADPH] (NIA) from Beauveria bassiana (White muscardine disease fungus).